Reading from the N-terminus, the 4882-residue chain is Dual E2 ubiquitin-conjugating enzyme/E3 ubiquitin-protein ligase BIRC6 (4882 aa).

WD repeat units lie at residues 71–109 (DGLH…QASA) and 110–139 (LSAK…AVGC). The BIR repeat unit spans residues 292–362 (RRETFTSWPH…RHSPNCPFVK (71 aa)). The Zn(2+) site is built by Cys331, Cys334, His351, and Cys358. Residues 382 to 429 (LPSADGADRIACFGSGSCPQFLAAATKRGKICIWDVSKLMKVHLKFEI) form a WD 3 repeat. Disordered stretches follow at residues 468–502 (DIPK…SQKE), 542–561 (GANP…KHQE), and 582–622 (ATSP…SELN). The segment covering 475-485 (DSDDLLEDSDS) has biased composition (acidic residues). Ser476, Ser483, and Ser485 each carry phosphoserine. WD repeat units lie at residues 504 to 723 (MEVS…VQCL), 733 to 854 (TLCI…QHIK), 855 to 931 (DPQD…AKVE), and 932 to 970 (PPKK…FLQI). A compositionally biased stretch (basic and acidic residues) spans 551–561 (KSEKTKEKHQE). The segment covering 582–591 (ATSPISSNSH) has biased composition (polar residues). A phosphoserine mark is found at Ser584 and Ser593. The span at 598-622 (SRTQGESISEQGSTDNESCTNSELN) shows a compositional bias: polar residues. The interval 1057–1077 (QQQRRHPQHLHQQHHGDAAQH) is disordered. The segment covering 1060-1069 (RRHPQHLHQQ) has biased composition (basic residues). A Phosphothreonine modification is found at Thr1724. Phosphoserine occurs at positions 2245 and 2978. Positions 2969 to 2998 (VTTNTTDSVSDEEKVSGGKDVNGSSASTPG) are disordered. The segment at 3212 to 3216 (HRRAR) is HRRAR loop; important for DIABLO/SMAC and HTRA2 binding. Residues 3842-4092 (DEKVTMFLQS…ESLLETCPIQ (251 aa)) enclose the Ubiquitin-like domain. Disordered regions lie at residues 3908 to 3927 (SEQK…KVKA) and 3943 to 3973 (LKSQ…IGSA). Thr3954 carries the post-translational modification Phosphothreonine. Ser4047 carries the phosphoserine modification. The interval 4285-4304 (VPNSSLSQTEPQVSNSHNPT) is disordered. Positions 4286 to 4304 (PNSSLSQTEPQVSNSHNPT) are enriched in polar residues. A UBC core domain is found at 4598-4765 (ARARRLAQEA…IRQATVKWAM (168 aa)). Cys4691 serves as the catalytic Glycyl thioester intermediate. Positions 4857–4882 (AGAEDTLTHDHVNPSSSKDLPSDFQL) are disordered. The span at 4869–4882 (NPSSSKDLPSDFQL) shows a compositional bias: polar residues.

It belongs to the BIRC6 family. In terms of assembly, homodimer; antiparallel. Interacts with DIABLO/SMAC, likely with higher affinity to SMAC dimer than SMAC monomer; this interaction blocks the substrate-binding site and inhibits the caspase inhibition activity of BIRC6. Interacts with RNF41, KIF23/MKLP1, USP8/UBPY, BIRC5/survivin, MAP2K1/MEK1, RAB8A/RAB8, RAB11A/RAB11, PLK1, EXOC3/SEC6 and EXOC4/SEC8. In terms of processing, ubiquitinated. Ubiquitination is mediated by RNF41 E3 ligase and leads to proteasomal degradation, impairing inhibition of apoptosis. Deubiquitinated by USP8/UBPY. Autoubiquitinated; mediated by E1 ubiquitin activating enzyme UBA6. Proteolytically cleaved. Acts as substrate for CASP3, CASP6, CASP7, CASP9 and HTRA2. Widely expressed. Highly expressed in the brain and kidney.

The protein resides in the golgi apparatus. It is found in the trans-Golgi network membrane. It localises to the endosome. Its subcellular location is the cytoplasm. The protein localises to the cytoskeleton. The protein resides in the spindle pole. It is found in the microtubule organizing center. It localises to the centrosome. Its subcellular location is the midbody. The protein localises to the midbody ring. The enzyme catalyses S-ubiquitinyl-[E1 ubiquitin-activating enzyme]-L-cysteine + [acceptor protein]-L-lysine = [E1 ubiquitin-activating enzyme]-L-cysteine + N(6)-monoubiquitinyl-[acceptor protein]-L-lysine.. With respect to regulation, inhibited by DIABLO/SMAC, which competes for the substrate-binding sites on BIRC6. BIRC6 inhibits caspases and protease by ubiquitination but BIRC6 itself is subjected to protease cleavage by CASP3, CASP6, CASP7, CASP9 and HTRA2 by protease cleavage. Functionally, anti-apoptotic protein known as inhibitor of apoptosis (IAP) which can regulate cell death by controlling caspases and by acting as an E3 ubiquitin-protein ligase. Unlike most IAPs, does not contain a RING domain and it is not a RING-type E3 ligase. Instead acts as a dual E2/E3 enzyme that combines ubiquitin conjugating (E2) and ubiquitin ligase (E3) activities in a single polypeptide. Ubiquitination is mediated by a non-canonical E1 ubiquitin activating enzyme UBA6. Ubiquitinates CASP3, CASP7 and CASP9 and inhibits their caspase activity; also ubiquitinates their procaspases but to a weaker extent. Ubiquitinates pro-apoptotic factors DIABLO/SMAC and HTRA2. DIABLO/SMAC antagonizes the caspase inhibition activity of BIRC6 by competing for the same binding sites as the caspases. Ubiquitinates the autophagy protein MAP1LC3B; this activity is also inhibited by DIABLO/SMAC. Important regulator for the final stages of cytokinesis. Crucial for normal vesicle targeting to the site of abscission, but also for the integrity of the midbody and the midbody ring, and its striking ubiquitin modification. Required for normal placenta development. The sequence is that of Dual E2 ubiquitin-conjugating enzyme/E3 ubiquitin-protein ligase BIRC6 (Birc6) from Mus musculus (Mouse).